The sequence spans 398 residues: O-methyltransferase penC (398 aa).

D263 contributes to the S-adenosyl-L-methionine binding site. H305 serves as the catalytic Proton acceptor.

Belongs to the class I-like SAM-binding methyltransferase superfamily. Cation-independent O-methyltransferase family.

The protein operates within secondary metabolite biosynthesis. Its pathway is alkaloid biosynthesis. It participates in mycotoxin biosynthesis. Its function is as follows. O-methyltransferase; part of the gene cluster that mediates the biosynthesis of penigequinolones, potent insecticidal alkaloids that contain a highly modified 10-carbon prenyl group. The first stage is catalyzed by the nonribosomal peptide synthetase penN that condenses anthranilic acid and O-methyl-L-tyrosine to produce 4'-methoxycyclopeptin. 4'-methoxycyclopeptin is then converted to 4'-methoxydehydrocyclopeptin by the ketoglutarate-dependent dioxygenase penM through dehydrogenation to form a double bond between C-alpha and C-beta of the O-methyltyrosine side chain. PenM also converts its first product methoxydehydrocyclopeptin to 4'-methoxycyclopenin. The following conversion of 4'methoxycyclopenin into 4'-methoxyviridicatin is catalyzed by the cyclopenase penL. 4'-methoxyviridicatin is the precursor of quinolone natural products, and is further converted to quinolinone B. The prenyltransferase penI then catalyzes the canonical Friedel-Crafts alkylation of quinolinone B with dimethylallyl cation to yield dimethylallyl quinolone, which is subjected to FAD-dependent dehydrogenation by the FAD-linked oxidoreductase penH to yield conjugated aryl diene. The delta(3') double bond then serves as the site of the second alkylation with DMAPP catalyzed by the prenyltransferase penG to yield a carbenium ion intermediate, which can be attacked by H(2)O to yield a styrenyl quinolone containing a C3'-hydroxyprenyl chain, or undergo cyclization to yield yaequinolones J1 and J2. The conversion of the styrenyl quinolone into the tetrahydrofuran-containing yaequinolone C is performed by the FAD-dependent monooxygenase penE and involves epoxidation of the terminal C7'-C8' olefin, followed by epoxide ring opening initiated by the C3' hydroxyl group. The predicted cysteine hydrolase penJ acts as an epoxide hydrolase that enhances the rate of the 5-exo-tet cyclization step, increasing the yield of yaequinolone C. PenF catalyzes the cationic rearrangement of the epoxide formed by penE (before ring opening to produce yaequinolone C) into yaequinolone D. Finally, the short-chain dehydrogenase/reductase (SDR)-like reductase penD, catalyzes both the dehydration of yaequinolone D and the reduction of the resulting oxonium to yield penigequinolone. The protein is O-methyltransferase penC of Penicillium thymicola.